The primary structure comprises 205 residues: Dr1-associated corepressor (205 aa).

Positions 14-77 (PARIKKIMQT…SHLKQCIELE (64 aa)) constitute a Histone-fold domain. Positions 91-205 (PDMQGDGEDN…EAEDEEDYDS (115 aa)) are disordered. Residues 98–108 (EDNHTDGDKGP) are compositionally biased toward basic and acidic residues. Over residues 138–155 (SEQEDESEDTDTDGEEET) the composition is skewed to acidic residues. Pro residues predominate over residues 172-193 (PPTPFMPFTSPLPLPPAPPGPS). The span at 196 to 205 (EAEDEEDYDS) shows a compositional bias: acidic residues.

This sequence belongs to the NC2 alpha/DRAP1 family. Heterodimer with DR1. Binds BTAF1. In terms of processing, phosphorylation reduces DNA binding, but has no effect on heterodimerization and TBP binding.

The protein resides in the nucleus. Its function is as follows. The association of the DR1/DRAP1 heterodimer with TBP results in a functional repression of both activated and basal transcription of class II genes. This interaction precludes the formation of a transcription-competent complex by inhibiting the association of TFIIA and/or TFIIB with TBP. Can bind to DNA on its own. The chain is Dr1-associated corepressor from Rattus norvegicus (Rat).